Consider the following 136-residue polypeptide: ATP synthase epsilon chain (136 aa).

It belongs to the ATPase epsilon chain family. In terms of assembly, F-type ATPases have 2 components, CF(1) - the catalytic core - and CF(0) - the membrane proton channel. CF(1) has five subunits: alpha(3), beta(3), gamma(1), delta(1), epsilon(1). CF(0) has three main subunits: a, b and c.

The protein localises to the cell inner membrane. Its function is as follows. Produces ATP from ADP in the presence of a proton gradient across the membrane. The protein is ATP synthase epsilon chain of Myxococcus xanthus (strain DK1622).